The sequence spans 311 residues: MYVHLALILGCWTVVLQGAETDVGERADNRRPIWNLAHMVNAVKQIPTFLDLGANALEADVTFKGSVPTYTYHGTPCDFGRDCIRWEYFNVFLKTLREYTTPGNAKYRDGFILFVLDLKTGSLSNDQVRPAGENVAKELLQNYWNNGNNGGRAYVVLSLPDIGHYEFVRGFKEVLKKEGHEDLLEKVGYDFSGPYLPSLPTLDATHEAYKKAGVDGHIWLSDGLTNFSPLGDMARLKEAIKSRDSANGFINKIYYWSVDKYSTTRTALDVGVDGIMTNYPNVLIDVLNEDGYKDNYRLATYDDNPWETYKK.

An N-terminal signal peptide occupies residues 1–21 (MYVHLALILGCWTVVLQGAET). Positions 22–26 (DVGER) are excised as a propeptide. Histidine 38 is a catalytic residue. 2 residues coordinate Mg(2+): glutamate 58 and aspartate 60. The active-site Nucleophile is the histidine 73. The cysteines at positions 77 and 83 are disulfide-linked. Position 117 (aspartate 117) interacts with Mg(2+).

It belongs to the arthropod phospholipase D family. Class I subfamily. Mg(2+) serves as cofactor. Expressed by the venom gland.

It localises to the secreted. It catalyses the reaction an N-(acyl)-sphingosylphosphocholine = an N-(acyl)-sphingosyl-1,3-cyclic phosphate + choline. The enzyme catalyses an N-(acyl)-sphingosylphosphoethanolamine = an N-(acyl)-sphingosyl-1,3-cyclic phosphate + ethanolamine. It carries out the reaction a 1-acyl-sn-glycero-3-phosphocholine = a 1-acyl-sn-glycero-2,3-cyclic phosphate + choline. The catalysed reaction is a 1-acyl-sn-glycero-3-phosphoethanolamine = a 1-acyl-sn-glycero-2,3-cyclic phosphate + ethanolamine. Catalytic activity and hemolysis are inhibited by divalent ion chelators (1,10-phenanthroline, EDTA, and EGTA). Dermonecrotic toxins cleave the phosphodiester linkage between the phosphate and headgroup of certain phospholipids (sphingolipid and lysolipid substrates), forming an alcohol (often choline) and a cyclic phosphate. This toxin acts on sphingomyelin (SM). It may also act on ceramide phosphoethanolamine (CPE), lysophosphatidylcholine (LPC) and lysophosphatidylethanolamine (LPE), but not on lysophosphatidylserine (LPS), and lysophosphatidylglycerol (LPG). It acts by transphosphatidylation, releasing exclusively cyclic phosphate products as second products. Shows complement-dependent hemolysis. Also induces dermonecrosis, vascular permeability, edema, inflammatory response, and platelet aggregation. The polypeptide is Dermonecrotic toxin (Loxosceles laeta (South American recluse spider)).